Consider the following 243-residue polypeptide: Glutathione S-transferase omega-2 (243 aa).

Residues 22–101 form the GST N-terminal domain; that stretch reads GLIRIYSMRF…YLDDAYPGRK (80 aa). The active-site Nucleophile is Cys-32. Residues Lys-59, Ile-72, and 85 to 86 each bind glutathione; that span reads ES. The GST C-terminal domain occupies 106 to 231; that stretch reads DPYERARQKM…IFQGFLNLYF (126 aa).

The protein belongs to the GST superfamily. Omega family. Expressed in a range of tissues, including the liver, kidney, skeletal muscle and prostate. Strongest expression in the testis.

It carries out the reaction RX + glutathione = an S-substituted glutathione + a halide anion + H(+). The enzyme catalyses L-dehydroascorbate + 2 glutathione = glutathione disulfide + L-ascorbate. The catalysed reaction is methylarsonate + 2 glutathione + H(+) = methylarsonous acid + glutathione disulfide + H2O. Functionally, exhibits glutathione-dependent thiol transferase activity. Has high dehydroascorbate reductase activity and may contribute to the recycling of ascorbic acid. Participates in the biotransformation of inorganic arsenic and reduces monomethylarsonic acid (MMA). The chain is Glutathione S-transferase omega-2 (GSTO2) from Homo sapiens (Human).